Here is a 478-residue protein sequence, read N- to C-terminus: Protein nucleotidyltransferase YdiU (478 aa).

8 residues coordinate ATP: G84, G86, R87, K107, D119, G120, R170, and R177. The active-site Proton acceptor is D246. Positions 247 and 256 each coordinate Mg(2+). D256 contacts ATP.

This sequence belongs to the SELO family. The cofactor is Mg(2+). It depends on Mn(2+) as a cofactor.

It catalyses the reaction L-seryl-[protein] + ATP = 3-O-(5'-adenylyl)-L-seryl-[protein] + diphosphate. It carries out the reaction L-threonyl-[protein] + ATP = 3-O-(5'-adenylyl)-L-threonyl-[protein] + diphosphate. The catalysed reaction is L-tyrosyl-[protein] + ATP = O-(5'-adenylyl)-L-tyrosyl-[protein] + diphosphate. The enzyme catalyses L-histidyl-[protein] + UTP = N(tele)-(5'-uridylyl)-L-histidyl-[protein] + diphosphate. It catalyses the reaction L-seryl-[protein] + UTP = O-(5'-uridylyl)-L-seryl-[protein] + diphosphate. It carries out the reaction L-tyrosyl-[protein] + UTP = O-(5'-uridylyl)-L-tyrosyl-[protein] + diphosphate. Nucleotidyltransferase involved in the post-translational modification of proteins. It can catalyze the addition of adenosine monophosphate (AMP) or uridine monophosphate (UMP) to a protein, resulting in modifications known as AMPylation and UMPylation. This chain is Protein nucleotidyltransferase YdiU, found in Shigella sonnei (strain Ss046).